The primary structure comprises 562 residues: MASRRLLSSLLRSSSRRSVSKSPISNINPKLSSSSPSSKSRASPYGYLLTRAAEYATSAAAAAPPQPPPAKPEGGKGGGKITDEFTGKGAIGQVCQVIGAVVDVRFDEGLPPILTSLEVLDHSIRLVLEVAQHMGEGMVRTIAMDGTEGLVRGQRVLNTGSPITVPVGRANPWTYHEVIGEPIDERGDIKTSHFLPIHREAPAFVDQATEQQILVTGIKVVDLLAPYQRGGKIGLFGGAGVGKTVLIMELINNVAKAHGGFSVFAGVGERTREGNDLYREMIESGVIKLGDKQADSKCALVYGQMNEPPGARARVGLTGLTVAEHFRDAEGQDVLLFIDNIFRFTQANSEVSALLGRIPSAVGYQPTLATDLGGLQERITTTKKGSITSVQAIYVPADDLTDPAPATTFAHLDATTVLSRQISELGIYPAVDPLDSTSRMLSPHILGEEHYNTARGVQKVLQNYKNLQDIIAILGMDELSEDDKLTVARARKIQRFLSQPFHVAEVFTGAPGKYVELKESITSFQGVLDGKYDDLPEQSFYMVGGIDEVIAKADKIAKESAS.

2 stretches are compositionally biased toward low complexity: residues 1–13 (MASR…LLRS) and 20–40 (SKSP…SSKS). Disordered regions lie at residues 1 to 43 (MASR…SRAS) and 58 to 83 (SAAA…KITD). A mitochondrion-targeting transit peptide spans 1-55 (MASRRLLSSLLRSSSRRSVSKSPISNINPKLSSSSPSSKSRASPYGYLLTRAAEY). 237 to 244 (GGAGVGKT) contacts ATP.

The protein belongs to the ATPase alpha/beta chains family. In terms of assembly, F-type ATPases have 2 components, CF(1) - the catalytic core - and CF(0) - the membrane proton channel. CF(1) has five subunits: alpha(3), beta(3), gamma(1), delta(1), epsilon(1). CF(0) has three main subunits: a, b and c.

It is found in the mitochondrion. Its subcellular location is the mitochondrion inner membrane. It carries out the reaction ATP + H2O + 4 H(+)(in) = ADP + phosphate + 5 H(+)(out). Mitochondrial membrane ATP synthase (F(1)F(0) ATP synthase or Complex V) produces ATP from ADP in the presence of a proton gradient across the membrane which is generated by electron transport complexes of the respiratory chain. F-type ATPases consist of two structural domains, F(1) - containing the extramembraneous catalytic core, and F(0) - containing the membrane proton channel, linked together by a central stalk and a peripheral stalk. During catalysis, ATP synthesis in the catalytic domain of F(1) is coupled via a rotary mechanism of the central stalk subunits to proton translocation. Subunits alpha and beta form the catalytic core in F(1). Rotation of the central stalk against the surrounding alpha(3)beta(3) subunits leads to hydrolysis of ATP in three separate catalytic sites on the beta subunits. This Hevea brasiliensis (Para rubber tree) protein is ATP synthase subunit beta, mitochondrial (ATPB).